The sequence spans 331 residues: D-aspartate oxidase 2 (331 aa).

4 residues coordinate FAD: Asp-35, Lys-36, Ser-43, and Gly-307.

The protein belongs to the DAMOX/DASOX family. The cofactor is FAD.

It is found in the cytoplasm. It catalyses the reaction D-aspartate + O2 + H2O = oxaloacetate + H2O2 + NH4(+). The catalysed reaction is D-glutamate + O2 + H2O = H2O2 + 2-oxoglutarate + NH4(+). In terms of biological role, selectively catalyzes the oxidative deamination of acidic amino acids. May play a role in the egg-laying events and early development of the worm, in addition to quality control of the germ cells. The polypeptide is D-aspartate oxidase 2 (Caenorhabditis briggsae).